Reading from the N-terminus, the 196-residue chain is RNA pyrophosphohydrolase (196 aa).

Residues 6 to 149 form the Nudix hydrolase domain; sequence GYRPNVGIVI…KRDVYRKVMK (144 aa). The Nudix box motif lies at 38–59; sequence GGINDNESAEQAMYRELHEEVG.

It belongs to the Nudix hydrolase family. RppH subfamily. A divalent metal cation serves as cofactor.

Its function is as follows. Accelerates the degradation of transcripts by removing pyrophosphate from the 5'-end of triphosphorylated RNA, leading to a more labile monophosphorylated state that can stimulate subsequent ribonuclease cleavage. The chain is RNA pyrophosphohydrolase from Haemophilus influenzae (strain ATCC 51907 / DSM 11121 / KW20 / Rd).